Consider the following 209-residue polypeptide: Molybdenum cofactor guanylyltransferase (209 aa).

Residues 16–18, lysine 28, asparagine 56, aspartate 69, and aspartate 103 contribute to the GTP site; that span reads LAG. Position 103 (aspartate 103) interacts with Mg(2+).

The protein belongs to the MobA family. As to quaternary structure, monomer. Requires Mg(2+) as cofactor.

The protein localises to the cytoplasm. The enzyme catalyses Mo-molybdopterin + GTP + H(+) = Mo-molybdopterin guanine dinucleotide + diphosphate. Transfers a GMP moiety from GTP to Mo-molybdopterin (Mo-MPT) cofactor (Moco or molybdenum cofactor) to form Mo-molybdopterin guanine dinucleotide (Mo-MGD) cofactor. In Rhizobium leguminosarum bv. trifolii (strain WSM2304), this protein is Molybdenum cofactor guanylyltransferase.